We begin with the raw amino-acid sequence, 2233 residues long: Acetyl-CoA carboxylase (2233 aa).

Serine 2 carries the N-acetylserine modification. Serine 2 is subject to Phosphoserine. The Biotin carboxylation domain maps to 58–567 (VISKILIANN…TTGWLDDLIT (510 aa)). Positions 216–408 (KTGLVSVDDD…LPAAQLQIAM (193 aa)) constitute an ATP-grasp domain. ATP is bound at residue 256–261 (GGGGKG). Glutamate 365, glutamate 379, and asparagine 381 together coordinate Mn(2+). Arginine 383 is a catalytic residue. Residues 694–768 (LEVENDPTQL…VAGDIMAIMT (75 aa)) form the Biotinyl-binding domain. An N6-biotinyllysine modification is found at lysine 735. Phosphoserine occurs at positions 790, 1148, 1157, and 1162. In terms of domain architecture, CoA carboxyltransferase N-terminal spans 1486–1822 (PYPVKEWLQP…KRNMPVPILE (337 aa)). The segment at 1486-2141 (PYPVKEWLQP…EEYLIKRLSH (656 aa)) is carboxyltransferase. Acetyl-CoA is bound at residue 1627–1629 (ARI). Arginine 1731 provides a ligand contact to CoA. One can recognise a CoA carboxyltransferase C-terminal domain in the interval 1826–2141 (TWDRPVDFTP…EEYLIKRLSH (316 aa)). Residue glycine 1998 coordinates acetyl-CoA. CoA contacts are provided by lysine 2034 and arginine 2036.

In terms of assembly, homodimer. Requires biotin as cofactor. It depends on Mn(2+) as a cofactor.

The protein localises to the cytoplasm. It is found in the endoplasmic reticulum membrane. It carries out the reaction hydrogencarbonate + acetyl-CoA + ATP = malonyl-CoA + ADP + phosphate + H(+). It catalyses the reaction N(6)-biotinyl-L-lysyl-[protein] + hydrogencarbonate + ATP = N(6)-carboxybiotinyl-L-lysyl-[protein] + ADP + phosphate + H(+). It participates in lipid metabolism; malonyl-CoA biosynthesis; malonyl-CoA from acetyl-CoA: step 1/1. By phosphorylation. The catalytic activity is inhibited by soraphen A, a polyketide isolated from the myxobacterium Sorangium cellulosum and a potent inhibitor of fungal growth. Its function is as follows. Carries out three functions: biotin carboxyl carrier protein, biotin carboxylase and carboxyltransferase. Involved in the synthesis of very-long-chain fatty acid synthesis which is required to maintain a functional nuclear envelope. Required for acylation and vacuolar membrane association of VAC8 which is necessary to maintain a normal morphology of the vacuole. This is Acetyl-CoA carboxylase (ACC1) from Saccharomyces cerevisiae (strain ATCC 204508 / S288c) (Baker's yeast).